The primary structure comprises 145 residues: Ribosomal RNA large subunit methyltransferase H (145 aa).

Residues Leu-64, Gly-93, and 112–117 each bind S-adenosyl-L-methionine; that span reads LSPLTF.

It belongs to the RNA methyltransferase RlmH family. As to quaternary structure, homodimer.

Its subcellular location is the cytoplasm. It catalyses the reaction pseudouridine(1915) in 23S rRNA + S-adenosyl-L-methionine = N(3)-methylpseudouridine(1915) in 23S rRNA + S-adenosyl-L-homocysteine + H(+). Its function is as follows. Specifically methylates the pseudouridine at position 1915 (m3Psi1915) in 23S rRNA. This Prochlorococcus marinus (strain NATL1A) protein is Ribosomal RNA large subunit methyltransferase H.